Here is a 313-residue protein sequence, read N- to C-terminus: MPGVDISFLKKSGRRTMAAAAVIALLGGCGADAGSEPATTAASTTAPSAATDAATAEFAALEQRFGARLGVYAVDTTSGAVVAYRADERFGMASTFKGLACGALLREHPLSSGYFDQVVRYSREEVVSYSPVTETRVDTGMTVAELCHATITVSDNTAGNQILKLLGGPAGFTAFLRSLGDEVSRLDRWETELNEVPPGEERDTTTPAAVAANYRALVLGDVLAEPERAQLRDWLVANTTGDQRIRAGVPAGWTVGDKTGGGSHGGNNDVAVAWTETGDPIVIALLSHRTDPAAKADNALLAEATRAVVTALR.

The signal sequence occupies residues Met-1–Gly-28. Cys-29 carries the N-palmitoyl cysteine lipid modification. Residue Cys-29 is the site of S-diacylglycerol cysteine attachment. Catalysis depends on Ser-94, which acts as the Acyl-ester intermediate. Substrate is bound at residue Ser-154. Residue Glu-190 is the Proton acceptor of the active site. Lys-258–Gly-260 provides a ligand contact to substrate.

It belongs to the class-A beta-lactamase family.

The protein localises to the cell membrane. The catalysed reaction is a beta-lactam + H2O = a substituted beta-amino acid. Inhibited by clavulanic acid, and at a low level by tazobactam and sulbactam. Its function is as follows. Confers high levels of resistance to amoxicillin, benzylpenicillin, piperacillin, ticarcillin and cephalothin. Also hydrolyzes aztreonam at a low level. Not active against ceftazidime, cefotaxime and imipenem. The chain is Beta-lactamase FAR-1 (bla) from Nocardia farcinica (strain IFM 10152).